The chain runs to 438 residues: Methylenetetrahydrofolate--tRNA-(uracil-5-)-methyltransferase TrmFO (438 aa).

9-14 (GGGLAG) contacts FAD.

The protein belongs to the MnmG family. TrmFO subfamily. The cofactor is FAD.

It is found in the cytoplasm. The enzyme catalyses uridine(54) in tRNA + (6R)-5,10-methylene-5,6,7,8-tetrahydrofolate + NADH + H(+) = 5-methyluridine(54) in tRNA + (6S)-5,6,7,8-tetrahydrofolate + NAD(+). It catalyses the reaction uridine(54) in tRNA + (6R)-5,10-methylene-5,6,7,8-tetrahydrofolate + NADPH + H(+) = 5-methyluridine(54) in tRNA + (6S)-5,6,7,8-tetrahydrofolate + NADP(+). Functionally, catalyzes the folate-dependent formation of 5-methyl-uridine at position 54 (M-5-U54) in all tRNAs. The polypeptide is Methylenetetrahydrofolate--tRNA-(uracil-5-)-methyltransferase TrmFO (Lactobacillus gasseri (strain ATCC 33323 / DSM 20243 / BCRC 14619 / CIP 102991 / JCM 1131 / KCTC 3163 / NCIMB 11718 / NCTC 13722 / AM63)).